We begin with the raw amino-acid sequence, 491 residues long: Glutamyl-tRNA(Gln) amidotransferase subunit A (491 aa).

Active-site charge relay system residues include Lys76 and Ser154. Residue Ser178 is the Acyl-ester intermediate of the active site.

The protein belongs to the amidase family. GatA subfamily. Heterotrimer of A, B and C subunits.

The enzyme catalyses L-glutamyl-tRNA(Gln) + L-glutamine + ATP + H2O = L-glutaminyl-tRNA(Gln) + L-glutamate + ADP + phosphate + H(+). In terms of biological role, allows the formation of correctly charged Gln-tRNA(Gln) through the transamidation of misacylated Glu-tRNA(Gln) in organisms which lack glutaminyl-tRNA synthetase. The reaction takes place in the presence of glutamine and ATP through an activated gamma-phospho-Glu-tRNA(Gln). The chain is Glutamyl-tRNA(Gln) amidotransferase subunit A from Cereibacter sphaeroides (strain ATCC 17025 / ATH 2.4.3) (Rhodobacter sphaeroides).